A 111-amino-acid polypeptide reads, in one-letter code: Large ribosomal subunit protein uL22 (111 aa).

Belongs to the universal ribosomal protein uL22 family. In terms of assembly, part of the 50S ribosomal subunit.

This protein binds specifically to 23S rRNA; its binding is stimulated by other ribosomal proteins, e.g. L4, L17, and L20. It is important during the early stages of 50S assembly. It makes multiple contacts with different domains of the 23S rRNA in the assembled 50S subunit and ribosome. Functionally, the globular domain of the protein is located near the polypeptide exit tunnel on the outside of the subunit, while an extended beta-hairpin is found that lines the wall of the exit tunnel in the center of the 70S ribosome. The protein is Large ribosomal subunit protein uL22 of Clostridium acetobutylicum (strain ATCC 824 / DSM 792 / JCM 1419 / IAM 19013 / LMG 5710 / NBRC 13948 / NRRL B-527 / VKM B-1787 / 2291 / W).